Consider the following 201-residue polypeptide: 3-isopropylmalate dehydratase small subunit (201 aa).

This sequence belongs to the LeuD family. LeuD type 1 subfamily. Heterodimer of LeuC and LeuD.

It catalyses the reaction (2R,3S)-3-isopropylmalate = (2S)-2-isopropylmalate. The protein operates within amino-acid biosynthesis; L-leucine biosynthesis; L-leucine from 3-methyl-2-oxobutanoate: step 2/4. Functionally, catalyzes the isomerization between 2-isopropylmalate and 3-isopropylmalate, via the formation of 2-isopropylmaleate. The chain is 3-isopropylmalate dehydratase small subunit from Cronobacter sakazakii (strain ATCC BAA-894) (Enterobacter sakazakii).